We begin with the raw amino-acid sequence, 416 residues long: Polyadenylation and cleavage factor homolog 1 (416 aa).

Residues 1–17 are compositionally biased toward polar residues; it reads MASNGSFSAQRNANART. The interval 1 to 80 is disordered; sequence MASNGSFSAQ…NNNNVSRVSS (80 aa). Positions 70-80 are enriched in low complexity; sequence SNNNNVSRVSS. Residues 199-220 are a coiled coil; the sequence is KELTDLLSLLNNEKEKKTLEAS. The C2H2-type zinc-finger motif lies at 254-276; that stretch reads RQCSSCGLRFKCQEEHSKHMDWH.

Forms a complex with cleavage and polyadenylation specificity factor (CPSF) subunits CLPS3, CLPS5, CPSF30, PCFS4, PCFS5, CSTF77 and FIPS3.

Its subcellular location is the nucleus. The polypeptide is Polyadenylation and cleavage factor homolog 1 (Arabidopsis thaliana (Mouse-ear cress)).